A 101-amino-acid polypeptide reads, in one-letter code: Chaperone modulatory protein CbpM (101 aa).

This sequence belongs to the CbpM family.

In terms of biological role, interacts with CbpA and inhibits both the DnaJ-like co-chaperone activity and the DNA binding activity of CbpA. Together with CbpA, modulates the activity of the DnaK chaperone system. Does not inhibit the co-chaperone activity of DnaJ. The protein is Chaperone modulatory protein CbpM of Salmonella arizonae (strain ATCC BAA-731 / CDC346-86 / RSK2980).